Consider the following 271-residue polypeptide: 2-amino-3,7-dideoxy-D-threo-hept-6-ulosonate synthase (271 aa).

Asp33 (proton acceptor) is an active-site residue. Residues 33–37 (DHGVS) and 153–155 (YPR) each bind 1-deoxy-D-threo-hexo-2,5-diulose 6-phosphate. Catalysis depends on Tyr153, which acts as the Proton donor. The active-site Schiff-base intermediate with substrate is the Lys184. 1-deoxy-D-threo-hexo-2,5-diulose 6-phosphate is bound by residues 209–210 (GG) and 236–237 (GR).

This sequence belongs to the DeoC/FbaB aldolase family. ADHS subfamily. In terms of assembly, homodecamer.

The enzyme catalyses 1-deoxy-D-threo-hexo-2,5-diulose 6-phosphate + L-aspartate 4-semialdehyde = 2,3-dioxopropyl phosphate + 2-amino-2,3,7-trideoxy-D-lyxo-hept-6-ulosonate. In terms of biological role, catalyzes a transaldol reaction between 6-deoxy-5-ketofructose 1-phosphate (DKFP) and L-aspartate semialdehyde (ASA) with an elimination of hydroxypyruvaldehyde phosphate to yield 2-amino-3,7-dideoxy-D-threo-hept-6-ulosonate (ADH). Plays a key role in an alternative pathway of the biosynthesis of 3-dehydroquinate (DHQ), which is involved in the canonical pathway for the biosynthesis of aromatic amino acids. This is 2-amino-3,7-dideoxy-D-threo-hept-6-ulosonate synthase from Methanococcus aeolicus (strain ATCC BAA-1280 / DSM 17508 / OCM 812 / Nankai-3).